The primary structure comprises 433 residues: N-lysine methyltransferase SMYD2 (433 aa).

The region spanning 7–241 (GGLERFCSAG…PGDEVFTSYI (235 aa)) is the SET domain. 17 to 19 (KGR) contributes to the S-adenosyl-L-methionine binding site. Zn(2+) is bound by residues C52, C55, C65, C68, C74, C78, H86, and C90. Residues 52 to 90 (CECCFARKEGLSKCGRCKQAFYCDVECQKEDWPLHKLEC) form an MYND-type zinc finger. Residues H137, 206–207 (NH), and 258–260 (YFF) contribute to the S-adenosyl-L-methionine site. S283 bears the Phosphoserine mark.

The protein belongs to the class V-like SAM-binding methyltransferase superfamily. In terms of assembly, interacts (via MYND-type zinc finger) with EPB41L3. Interacts (via SET domain) with p53/TP53. Interacts with RB1 and HSP90AA1. Interacts with RNA polymerase II and HELZ. Interacts with SIN3A and HDAC1. In terms of tissue distribution, highly expressed in heart, skeletal muscle and brain tissue. During cardiac development, it is differentially expressed with highest expression in the neonatal heart while very low expression is detected at 12.5 dpc and adult. Specifically expressed in cardiomyocytes (at protein level).

It is found in the cytoplasm. The protein localises to the cytosol. Its subcellular location is the nucleus. The catalysed reaction is L-lysyl(4)-[histone H3] + 3 S-adenosyl-L-methionine = N(6),N(6),N(6)-trimethyl-L-lysyl(4)-[histone H3] + 3 S-adenosyl-L-homocysteine + 3 H(+). It catalyses the reaction L-lysyl-[protein] + S-adenosyl-L-methionine = N(6)-methyl-L-lysyl-[protein] + S-adenosyl-L-homocysteine + H(+). Functionally, protein-lysine N-methyltransferase that methylates both histones and non-histone proteins, including p53/TP53 and RB1. Specifically trimethylates histone H3 'Lys-4' (H3K4me3) in vivo. The activity requires interaction with HSP90alpha. Shows even higher methyltransferase activity on p53/TP53. Monomethylates 'Lys-370' of p53/TP53, leading to decreased DNA-binding activity and subsequent transcriptional regulation activity of p53/TP53. Monomethylates RB1 at 'Lys-860'. In Mus musculus (Mouse), this protein is N-lysine methyltransferase SMYD2 (Smyd2).